A 129-amino-acid polypeptide reads, in one-letter code: Mini-ribonuclease 3-like protein (129 aa).

D23 is an active-site residue.

It belongs to the MrnC RNase family.

Its function is as follows. Might be a ribonuclease involved in RNA processing. The polypeptide is Mini-ribonuclease 3-like protein (mrnCL) (Fusobacterium nucleatum subsp. nucleatum (strain ATCC 25586 / DSM 15643 / BCRC 10681 / CIP 101130 / JCM 8532 / KCTC 2640 / LMG 13131 / VPI 4355)).